Reading from the N-terminus, the 394-residue chain is Argininosuccinate synthase (394 aa).

8–16 contributes to the ATP binding site; that stretch reads AYSGGLDTS. L-citrulline contacts are provided by Tyr86 and Ser91. Position 116 (Gly116) interacts with ATP. L-aspartate is bound by residues Thr118, Asn122, and Asp123. An L-citrulline-binding site is contributed by Asn122. 5 residues coordinate L-citrulline: Arg126, Ser172, Ser181, Glu256, and Tyr268.

This sequence belongs to the argininosuccinate synthase family. Type 1 subfamily. As to quaternary structure, homotetramer.

It is found in the cytoplasm. It catalyses the reaction L-citrulline + L-aspartate + ATP = 2-(N(omega)-L-arginino)succinate + AMP + diphosphate + H(+). The protein operates within amino-acid biosynthesis; L-arginine biosynthesis; L-arginine from L-ornithine and carbamoyl phosphate: step 2/3. The polypeptide is Argininosuccinate synthase (Methanococcoides burtonii (strain DSM 6242 / NBRC 107633 / OCM 468 / ACE-M)).